The chain runs to 717 residues: F-box only protein 42 (717 aa).

The segment covering 1 to 30 (MASSSDSEDDSVMAVDQEETALEGTMEQDE) has biased composition (acidic residues). A disordered region spans residues 1–34 (MASSSDSEDDSVMAVDQEETALEGTMEQDEDPHP). The 50-residue stretch at 44–93 (NRSMSELPEEVLEYILSFLSPYQEHKTAALVCKQWYRLIKGVAHQCYHGF) folds into the F-box domain. 4 Kelch repeats span residues 132–184 (SMYV…VYKD), 186–242 (LVLF…VIGD), 244–293 (MIVF…VIDD), and 295–342 (TLLI…LWCH). The disordered stretch occupies residues 361–452 (RAPLSPSLNS…NLSPGTVAVG (92 aa)). The span at 363–376 (PLSPSLNSRPSPIS) shows a compositional bias: low complexity. 2 positions are modified to phosphoserine: serine 365 and serine 373. Threonine 378 carries the post-translational modification Phosphothreonine. Positions 416–426 (QRQTPSGSREG) are enriched in polar residues. Residue serine 552 is modified to Phosphoserine. A compositionally biased stretch (low complexity) spans 570-595 (GPSASAALSPPLGSSPSSPGSQSLSS). The disordered stretch occupies residues 570-632 (GPSASAALSP…HHPPQSLNVG (63 aa)).

Component of some SCF complex, composed of CUL1, SKP1, RBX1 and FBXO42. Interacts (via the kelch domain) with p53/TP53; interaction is direct.

Functionally, substrate-recognition component of some SCF (SKP1-CUL1-F-box protein)-type E3 ubiquitin ligase complex. Specifically recognizes p53/TP53, promoting its ubiquitination and degradation. This chain is F-box only protein 42 (Fbxo42), found in Mus musculus (Mouse).